The following is a 231-amino-acid chain: MPSTPLANGGTPPMGGGERTTVTTSTVADDKPGVSMMEQLVPEITTHALSYLDYPSLCRLSMTNSLMRKAANDDNAWKALYHKDFTLEQDGITPVNGWKEYYATTRAIISVNTEFFTIIRDRALQAMARLWLNSDYVKCIHASGELFSGYNEVIQSWQLCFNWEQGFDFQVHTVRTRILTDMAWVTMKAYLNVDGGPFLITNVFEFHNGRWHMVHHHSSVMLIDDQQVVVH.

A disordered region spans residues 1-24 (MPSTPLANGGTPPMGGGERTTVTT). The F-box domain occupies 34–80 (VSMMEQLVPEITTHALSYLDYPSLCRLSMTNSLMRKAANDDNAWKAL).

Part of a SCF (ASK-cullin-F-box) protein ligase complex. Interacts with SKP1A/ASK1.

It participates in protein modification; protein ubiquitination. Functionally, component of SCF(ASK-cullin-F-box) E3 ubiquitin ligase complexes, which may mediate the ubiquitination and subsequent proteasomal degradation of target proteins. The chain is F-box protein SKIP8 (SKIP8) from Arabidopsis thaliana (Mouse-ear cress).